We begin with the raw amino-acid sequence, 447 residues long: MFRARIRGIYATALTKLALDWGFKVVQPTPQIAERFGLRPDPSPPDVTVKDHESKTGVVAIGDCPAVDHLLERLREYADPVVAKASAGLHDVFVGRVVGEGLVEGPGGLMEVPGRYVLQPGAASVFTVVKPPVGPLRGVAVPEIVVDGKLLELNTTGRVAYSRHIGEEERLRLRILAETRLKAYASIGLRFKSSAKYAGEEELAREAEELYRELLRLSQGGPPGALLRRGRCLAVVLFDKRAKFKLDEARAAVVPTVRGHHALRGQGLGRCLDLLDHVGADVYERAAAFLARGRVAIYHVKPWGEVVKMRGEVVKALEDVLVVKRTLKPGGVLDGIGARIEPGTYALTCVPRSGGYVVHSYYSASGVYLGTYVNANTEPEWGRRVVYIDLLVDKAYGPDGVERVLDEEELQRYAHMLPERLRRPEAPGGKICTPEGLTSAPPRSSSA.

The segment at 424–447 (PEAPGGKICTPEGLTSAPPRSSSA) is disordered.

Belongs to the FAU-1 family.

Probable RNase involved in rRNA stability through maturation and/or degradation of precursor rRNAs. Binds to RNA in loop regions with AU-rich sequences. The chain is Probable ribonuclease FAU-1 from Pyrobaculum neutrophilum (strain DSM 2338 / JCM 9278 / NBRC 100436 / V24Sta) (Thermoproteus neutrophilus).